The following is a 473-amino-acid chain: Glutamyl-tRNA reductase (473 aa).

Substrate-binding positions include 49–52, serine 109, 114–116, and glutamine 120; these read TCNR and EHQ. The active-site Nucleophile is the cysteine 50. 189–194 provides a ligand contact to NADP(+); it reads GAGAMA. Positions 422–473 are disordered; sequence VAISAPQPSTDSPARAAYQPTDEAATDAEPRRDDAEPPSAAAAQDAGRESRP.

Belongs to the glutamyl-tRNA reductase family. Homodimer.

It catalyses the reaction (S)-4-amino-5-oxopentanoate + tRNA(Glu) + NADP(+) = L-glutamyl-tRNA(Glu) + NADPH + H(+). It functions in the pathway porphyrin-containing compound metabolism; protoporphyrin-IX biosynthesis; 5-aminolevulinate from L-glutamyl-tRNA(Glu): step 1/2. Its function is as follows. Catalyzes the NADPH-dependent reduction of glutamyl-tRNA(Glu) to glutamate 1-semialdehyde (GSA). This Acidothermus cellulolyticus (strain ATCC 43068 / DSM 8971 / 11B) protein is Glutamyl-tRNA reductase.